Consider the following 174-residue polypeptide: Large ribosomal subunit protein uL10 (174 aa).

Belongs to the universal ribosomal protein uL10 family. In terms of assembly, part of the ribosomal stalk of the 50S ribosomal subunit. The N-terminus interacts with L11 and the large rRNA to form the base of the stalk. The C-terminus forms an elongated spine to which L12 dimers bind in a sequential fashion forming a multimeric L10(L12)X complex.

In terms of biological role, forms part of the ribosomal stalk, playing a central role in the interaction of the ribosome with GTP-bound translation factors. The chain is Large ribosomal subunit protein uL10 from Geotalea uraniireducens (strain Rf4) (Geobacter uraniireducens).